We begin with the raw amino-acid sequence, 339 residues long: Dehydrogenase/reductase SDR family member 7 (339 aa).

The signal sequence occupies residues methionine 1–alanine 28. NAD(+) contacts are provided by serine 60 and isoleucine 62. Serine 190 contributes to the substrate binding site. Residues tyrosine 203, lysine 207, and serine 239 each coordinate NAD(+). The active-site Proton acceptor is the tyrosine 203.

It belongs to the short-chain dehydrogenases/reductases (SDR) family. In terms of tissue distribution, found predominantly in the adrenal glands, liver, thyroid, prostate, small intestine, colon, stomach, kidney and brain. Lower levels observed in skeletal muscle, the lung and the spleen.

The protein resides in the endoplasmic reticulum membrane. The catalysed reaction is all-trans-retinol + NADP(+) = all-trans-retinal + NADPH + H(+). It carries out the reaction 5alpha-androstane-3alpha,17beta-diol + NADP(+) = 17beta-hydroxy-5alpha-androstan-3-one + NADPH + H(+). Its function is as follows. NADPH-dependent oxidoreductase which catalyzes the reduction of a variety of compounds bearing carbonyl groups including steroids, retinoids and xenobiotics. Catalyzes the reduction/inactivation of 5alpha-dihydrotestosterone to 3alpha-androstanediol, with a possible role in the modulation of androgen receptor function. Involved in the reduction of all-trans-retinal to all-trans-retinol. Converts cortisone to 20beta-dihydrocortisone in vitro, although the physiological relevance of this activity is questionable. Reduces exogenous compounds such as quinones (1,2-naphtoquinone, 9,10-phenantrenequinone and benzoquinone) and other xenobiotics (alpha-diketones) in vitro, suggesting a role in the biotransformation of xenobiotics with carbonyl group. A dehydrogenase activity has not been detected so far. May play a role as tumor suppressor. The sequence is that of Dehydrogenase/reductase SDR family member 7 from Homo sapiens (Human).